Here is a 151-residue protein sequence, read N- to C-terminus: Ribosome maturation factor RimP (151 aa).

It belongs to the RimP family.

Its subcellular location is the cytoplasm. Its function is as follows. Required for maturation of 30S ribosomal subunits. This Shewanella baltica (strain OS223) protein is Ribosome maturation factor RimP.